Here is a 107-residue protein sequence, read N- to C-terminus: Multidrug resistance protein mmr (107 aa).

The next 4 membrane-spanning stretches (helical) occupy residues 2 to 19, 29 to 51, 58 to 80, and 84 to 106; these read IYLY…ATSL, LWPT…LSIS, VAYA…LFLG, and SVMK…LAGA.

It belongs to the drug/metabolite transporter (DMT) superfamily. Small multidrug resistance (SMR) (TC 2.A.7.1) family. Mmr subfamily.

It is found in the cell membrane. In terms of biological role, multidrug efflux pump. Confers resistance to tetraphenylphosphonium (TPP), erythromycin, ethidium bromide, acriflavine, safranin O and pyronin Y. This Mycobacterium bovis (strain ATCC BAA-935 / AF2122/97) protein is Multidrug resistance protein mmr (mmr).